Reading from the N-terminus, the 401-residue chain is Bifunctional sugar-1-phosphate nucleotidylyltransferase/acetyltransferase (401 aa).

The segment at 1–220 is nucleotidylyltransferase; that stretch reads MKAFILAAGS…KPWNIIDVNK (220 aa). A ribonucleoside 5'-triphosphate-binding positions include 8–13, Gln73, and Gly79; that span reads AGSGER. N-acetyl-alpha-D-glucosamine 1-phosphate-binding residues include Thr80, Tyr97, Gly131, Glu146, and Asn157. Residues 236 to 401 are acetyltransferase; it reads EDNVKIKGKV…DVGYGEFFKV (166 aa).

The protein in the N-terminal section; belongs to the N-acetylglucosamine-1-phosphate uridyltransferase family. In the C-terminal section; belongs to the transferase hexapeptide repeat family. Homotrimer. Requires Co(2+) as cofactor. Mn(2+) serves as cofactor.

The enzyme catalyses dTTP + alpha-D-glucose 1-phosphate + H(+) = dTDP-alpha-D-glucose + diphosphate. The catalysed reaction is alpha-D-glucose 1-phosphate + UTP + H(+) = UDP-alpha-D-glucose + diphosphate. It catalyses the reaction N-acetyl-alpha-D-galactosamine 1-phosphate + UTP + H(+) = UDP-N-acetyl-alpha-D-galactosamine + diphosphate. It carries out the reaction N-acetyl-alpha-D-glucosamine 1-phosphate + UTP + H(+) = UDP-N-acetyl-alpha-D-glucosamine + diphosphate. The enzyme catalyses alpha-D-galactosamine 1-phosphate + acetyl-CoA = N-acetyl-alpha-D-galactosamine 1-phosphate + CoA + H(+). The catalysed reaction is alpha-D-glucosamine 1-phosphate + acetyl-CoA = N-acetyl-alpha-D-glucosamine 1-phosphate + CoA + H(+). It functions in the pathway nucleotide-sugar biosynthesis; UDP-N-acetyl-alpha-D-glucosamine biosynthesis; N-acetyl-alpha-D-glucosamine 1-phosphate from alpha-D-glucosamine 6-phosphate (route II): step 2/2. The protein operates within nucleotide-sugar biosynthesis; UDP-N-acetyl-alpha-D-glucosamine biosynthesis; UDP-N-acetyl-alpha-D-glucosamine from N-acetyl-alpha-D-glucosamine 1-phosphate: step 1/1. GlcN-1-P acetyltransferase activity is inhibited by divalent cations. GalN-1-P acetyltransferase activity is enhanced by Co(2+), Mg(2+) and Ca(2+), but inhibited by Zn(2+) or Mn(2+). Bifunctional enzyme involved in the synthesis of UDP-N-acetylglucosamine (UDP-GlcNAc) and UDP-N-acetylgalactosamine (UDP-GalNAc). It has multiple amino-sugar-1-phosphate acetyltransferase activities, including glucosamine-1-phosphate (GlcN-1-P) acetyltransferase and galactosamine-1-phosphate (GalN-1-P) acetyltransferase activities, and multiple sugar-1-phosphate nucleotidylyltransferase activities, including N-acetylglucosamine-1-phosphate (GlcNAc-1-P) uridyltransferase and N-acetylgalactosamine-1-phosphate (GalNAc-1-P) uridyltransferase activities. Also catalyzes the formation of dTDP-glucose from dTTP and glucose-1-phosphate (Glc-1-P), and the reverse reaction, which produces dTTP from dTDP-glucose and diphosphate. Can also catalyze the formation of UDP-glucose from UTP and glucose-1-phosphate. This is Bifunctional sugar-1-phosphate nucleotidylyltransferase/acetyltransferase from Sulfurisphaera tokodaii (strain DSM 16993 / JCM 10545 / NBRC 100140 / 7) (Sulfolobus tokodaii).